The chain runs to 135 residues: Small ribosomal subunit protein uS12c (135 aa).

Belongs to the universal ribosomal protein uS12 family. Part of the 30S ribosomal subunit.

It is found in the plastid. It localises to the chloroplast. In terms of biological role, with S4 and S5 plays an important role in translational accuracy. Located at the interface of the 30S and 50S subunits. The sequence is that of Small ribosomal subunit protein uS12c (rps12) from Adiantum capillus-veneris (Maidenhair fern).